The chain runs to 478 residues: Sorting nexin-4 (478 aa).

Residues 1–10 (MAVIDQHQDD) show a composition bias toward basic and acidic residues. The segment at 1-56 (MAVIDQHQDDFSNVSWNTDEHTAAESSSSVTATEFDDTERNGHNAYESDAPGSDGQ) is disordered. Residues 24–33 (AESSSSVTAT) show a composition bias toward low complexity. Positions 58 to 180 (VLDCVVSEPL…IFLESPDWNA (123 aa)) constitute a PX domain. The a 1,2-diacyl-sn-glycero-3-phospho-(1D-myo-inositol-3-phosphate) site is built by arginine 101, threonine 103, lysine 127, and arginine 146. Residues 459–478 (EGVSGTRSTGVEPPGRRLAD) are disordered.

Belongs to the sorting nexin family. In terms of assembly, interacts with the mitochondrial prohibitin complex subunits PHB1 and PHB2; the interaction is direct and plays a role in mitophagy.

Its subcellular location is the cytoplasm. It localises to the cytosol. It is found in the preautophagosomal structure membrane. The protein localises to the endosome membrane. The protein resides in the mitochondrion membrane. Its subcellular location is the lipid droplet. Functionally, sorting nexin, involved in the separation or division of vacuoles throughout the entire life cycle of the cells. Involved in retrieval of late-Golgi SNAREs from post-Golgi endosomes to the trans-Golgi network, for cytoplasm to vacuole transport (Cvt), and autophagy of large cargos including mitophagy, pexophagy and glycophagy. Required for the switch to necrotrophic growth. This chain is Sorting nexin-4, found in Colletotrichum higginsianum (strain IMI 349063) (Crucifer anthracnose fungus).